The chain runs to 72 residues: MKKKIHPAYSQIIATCSCGNIIEIFSTVNVNLNLDICAKCHPFYTGKQRIIDTGGRVERFKKRFKLIKKDTV.

Zn(2+)-binding residues include C16, C18, C37, and C40.

The protein belongs to the bacterial ribosomal protein bL31 family. Type A subfamily. Part of the 50S ribosomal subunit. It depends on Zn(2+) as a cofactor.

Functionally, binds the 23S rRNA. The sequence is that of Large ribosomal subunit protein bL31 from Buchnera aphidicola subsp. Schizaphis graminum (strain Sg).